The following is a 166-amino-acid chain: Putative 4-hydroxy-4-methyl-2-oxoglutarate aldolase (166 aa).

Substrate contacts are provided by residues 74–77 (GDQI) and Arg-96. Asp-97 lines the a divalent metal cation pocket.

It belongs to the class II aldolase/RraA-like family. As to quaternary structure, homotrimer. A divalent metal cation is required as a cofactor.

It carries out the reaction 4-hydroxy-4-methyl-2-oxoglutarate = 2 pyruvate. The enzyme catalyses oxaloacetate + H(+) = pyruvate + CO2. Its function is as follows. Catalyzes the aldol cleavage of 4-hydroxy-4-methyl-2-oxoglutarate (HMG) into 2 molecules of pyruvate. Also contains a secondary oxaloacetate (OAA) decarboxylase activity due to the common pyruvate enolate transition state formed following C-C bond cleavage in the retro-aldol and decarboxylation reactions. This Xanthomonas axonopodis pv. citri (strain 306) protein is Putative 4-hydroxy-4-methyl-2-oxoglutarate aldolase.